Consider the following 145-residue polypeptide: Small ribosomal subunit protein uS12A (145 aa).

A Hydroxyproline modification is found at Pro64.

It belongs to the universal ribosomal protein uS12 family.

The polypeptide is Small ribosomal subunit protein uS12A (RPS23A) (Naumovozyma castellii (Yeast)).